Here is a 73-residue protein sequence, read N- to C-terminus: ATP synthase subunit c (73 aa).

2 helical membrane passes run L4–I24 and G51–F71.

The protein belongs to the ATPase C chain family. F-type ATPases have 2 components, F(1) - the catalytic core - and F(0) - the membrane proton channel. F(1) has five subunits: alpha(3), beta(3), gamma(1), delta(1), epsilon(1). F(0) has three main subunits: a(1), b(2) and c(10-14). The alpha and beta chains form an alternating ring which encloses part of the gamma chain. F(1) is attached to F(0) by a central stalk formed by the gamma and epsilon chains, while a peripheral stalk is formed by the delta and b chains.

It is found in the cell membrane. F(1)F(0) ATP synthase produces ATP from ADP in the presence of a proton or sodium gradient. F-type ATPases consist of two structural domains, F(1) containing the extramembraneous catalytic core and F(0) containing the membrane proton channel, linked together by a central stalk and a peripheral stalk. During catalysis, ATP synthesis in the catalytic domain of F(1) is coupled via a rotary mechanism of the central stalk subunits to proton translocation. Functionally, key component of the F(0) channel; it plays a direct role in translocation across the membrane. A homomeric c-ring of between 10-14 subunits forms the central stalk rotor element with the F(1) delta and epsilon subunits. This Caldanaerobacter subterraneus subsp. tengcongensis (strain DSM 15242 / JCM 11007 / NBRC 100824 / MB4) (Thermoanaerobacter tengcongensis) protein is ATP synthase subunit c.